The chain runs to 147 residues: D(1B) dopamine receptor (147 aa).

Residues 1-12 (SILISFPVQLNW) form a helical membrane-spanning segment. Residues 13–55 (HRDQAGSWGGLDLTNNLANWTPWEEDVWEPDVRAENCDSSLNR) are Extracellular-facing. An N-linked (GlcNAc...) asparagine glycan is attached at Asn54. The helical transmembrane segment at 56–78 (TYAISSSLVSFYIPVAIMIVTYT) threads the bilayer. The Cytoplasmic segment spans residues 79-128 (RIYRIAQVQIRRISSLERAAEHAQSCRSSAACAPDTSLRASIKKETKVLK). Residues 129–147 (TLSVIMGVFVCCWLPFFIL) traverse the membrane as a helical segment.

Belongs to the G-protein coupled receptor 1 family.

The protein localises to the cell membrane. Dopamine receptor whose activity is mediated by G proteins which activate adenylyl cyclase. The protein is D(1B) dopamine receptor (DRD5) of Macaca mulatta (Rhesus macaque).